Consider the following 75-residue polypeptide: Cruzioseptin-7 (75 aa).

Positions 1-22 are cleaved as a signal peptide; the sequence is MAKLKKSLFLVLFLGLVSLSIC. Residues 23–43 constitute a propeptide that is removed on maturation; that stretch reads EEEKREEENEEVQEDDDQSEE. Positions 25 to 44 are disordered; the sequence is EKREEENEEVQEDDDQSEEK. A compositionally biased stretch (acidic residues) spans 30–41; that stretch reads ENEEVQEDDDQS.

As to expression, expressed by the skin glands.

The protein resides in the secreted. Its function is as follows. Has antimicrobial activity. The polypeptide is Cruzioseptin-7 (Cruziohyla calcarifer (Splendid leaf frog)).